Here is a 107-residue protein sequence, read N- to C-terminus: uncharacterized protein (107 aa).

3 helical membrane-spanning segments follow: residues 16–36, 47–67, and 85–105; these read VIPCTLSSPSFVLMAVISESL, IISLIESAVTSLSYVTWHSLV, and LIVLVQALHVIPCTASITSLI.

The protein localises to the membrane. This is an uncharacterized protein from Saccharomyces cerevisiae (strain ATCC 204508 / S288c) (Baker's yeast).